The chain runs to 411 residues: Copper resistance protein CRF1 (411 aa).

Positions 1 to 40 (MVVIEGIKYACERCIRGHRVSSCTHTQQPLIRIKPKGRPA) form a DNA-binding region, copper-fist. 4 residues coordinate Zn(2+): C11, C14, C23, and H25. Composition is skewed to low complexity over residues 115-190 (QQQA…PHSP), 205-214 (SSSSLSSLHS), 227-241 (SHNSLSAASQLANSP), and 350-370 (SVAANPSASASASSIQTPPSS). Disordered stretches follow at residues 115 to 241 (QQQA…ANSP) and 348 to 389 (EMSV…VSPA).

Its subcellular location is the nucleus. In terms of biological role, transcriptional regulator involved in resistance to high copper concentration. The chain is Copper resistance protein CRF1 (CRF1) from Yarrowia lipolytica (strain CLIB 122 / E 150) (Yeast).